Consider the following 128-residue polypeptide: Phycoerythrin alpha-3 chain, chloroplastic (128 aa).

A chloroplast-targeting transit peptide spans methionine 1–alanine 52. Residue lysine 56 is modified to 5-hydroxylysine. Residues glycine 70–glutamate 89 form a disordered region. 15,16-dihydrobiliverdin-binding positions include cysteine 71, arginine 73, glutamate 77–serine 78, and lysine 93.

The protein belongs to the phycoerythrin family. As to quaternary structure, heterotetramer of 2 different alpha chains and 2 identical beta chains. The subunit composition could comprise of any combination of 2 out of 4 different alpha units with an invariant beta unit. Contains one covalently linked 15,16-dihydrobiliverdin chromophore.

Its subcellular location is the plastid. It is found in the chloroplast thylakoid membrane. Its function is as follows. Light-harvesting photosynthetic tetrapyrrole chromophore-protein from the phycobiliprotein complex. The protein is Phycoerythrin alpha-3 chain, chloroplastic (cpeA3) of Rhodomonas sp. (strain CS 24) (Chroomonas sp. (strain CS24)).